The sequence spans 311 residues: Probable porphobilinogen deaminase (311 aa).

Residue C237 is modified to S-(dipyrrolylmethanemethyl)cysteine. The tract at residues 270 to 289 (SKTGDKNNPKSLGQSAGEEL) is disordered.

It belongs to the HMBS family. Dipyrromethane is required as a cofactor.

The catalysed reaction is 4 porphobilinogen + H2O = hydroxymethylbilane + 4 NH4(+). The protein operates within porphyrin-containing compound metabolism; protoporphyrin-IX biosynthesis; coproporphyrinogen-III from 5-aminolevulinate: step 2/4. In terms of biological role, tetrapolymerization of the monopyrrole PBG into the hydroxymethylbilane pre-uroporphyrinogen in several discrete steps. This is Probable porphobilinogen deaminase from Nitrosopumilus maritimus (strain SCM1).